The following is a 445-amino-acid chain: Na(+)-translocating NADH-quinone reductase subunit A (445 aa).

This sequence belongs to the NqrA family. In terms of assembly, composed of six subunits; NqrA, NqrB, NqrC, NqrD, NqrE and NqrF.

It carries out the reaction a ubiquinone + n Na(+)(in) + NADH + H(+) = a ubiquinol + n Na(+)(out) + NAD(+). In terms of biological role, NQR complex catalyzes the reduction of ubiquinone-1 to ubiquinol by two successive reactions, coupled with the transport of Na(+) ions from the cytoplasm to the periplasm. NqrA to NqrE are probably involved in the second step, the conversion of ubisemiquinone to ubiquinol. This is Na(+)-translocating NADH-quinone reductase subunit A from Pseudomonas aeruginosa (strain UCBPP-PA14).